We begin with the raw amino-acid sequence, 1063 residues long: Structural polyprotein (1063 aa).

The tract at residues 1–131 (MASTTPITME…LGPPTNPFQA (131 aa)) is disordered. The span at 18-34 (AQSRALRAGLAAGASQS) shows a compositional bias: low complexity. The human C1QBP/SF2P32-binding stretch occupies residues 30–69 (GASQSRRPRPPRQRDSSTSGDDSGRDSGGPRRRRGNRGRG). A Phosphoserine; by host modification is found at Ser-46. Over residues 59–69 (PRRRRGNRGRG) the composition is skewed to basic residues. Over residues 70–87 (QRKDWSRAPPPPEERQES) the composition is skewed to basic and acidic residues. Positions 93–107 (APKPSRAPPQQPQPP) are enriched in pro residues. A disulfide bond links Cys-153 and Cys-197. The functions as E2 signal peptide stretch occupies residues 279–300 (GAPQAFLAGLLLAAVAVGTARA). At 301 to 534 (GLQPRADMAA…LWLATANALS (234 aa)) the chain is on the extracellular side. N-linked (GlcNAc...) asparagine; by host glycans are attached at residues Asn-353, Asn-371, Asn-410, and Asn-429. The helical transmembrane segment at 535-555 (LDHAFAAFVLLVPWVLIFMVC) threads the bilayer. The Cytoplasmic segment spans residues 556–582 (RRACRRRGAAAALTAVVLQGYNPPAYG). The functions as E1 signal peptide stretch occupies residues 563–582 (GAAAALTAVVLQGYNPPAYG). At 583 to 1028 (EEAFTYLCTA…QTWAEWAAAH (446 aa)) the chain is on the extracellular side. 8 disulfides stabilise this stretch: Cys-590/Cys-595, Cys-619/Cys-824, Cys-641/Cys-653, Cys-699/Cys-712, Cys-758/Cys-767, Cys-807/Cys-817, Cys-931/Cys-934, and Cys-950/Cys-983. The N-linked (GlcNAc...) asparagine; by host glycan is linked to Asn-658. Residues Asn-670 and Ala-671 each coordinate Ca(2+). The Ca(2+) site is built by Asp-718 and Thr-719. 2 N-linked (GlcNAc...) asparagine; by host glycosylation sites follow: Asn-759 and Asn-791. O-linked (GalNAc...) threonine; by host glycosylation is found at Thr-1011 and Thr-1012. A helical transmembrane segment spans residues 1029 to 1049 (WWQLTLGAICALLLAGLLACC). The Cytoplasmic segment spans residues 1050 to 1063 (AKCLYYLRGAIAPR).

In terms of assembly, homodimer; further assembles into homooligomer. Interacts with human C1QBP. Interacts (via N-terminus) with protease/methyltransferase p150. Heterodimer with spike glycoprotein E2. As to quaternary structure, heterodimer with spike glycoprotein E1. Post-translationally, structural polyprotein: Specific enzymatic cleavages in vivo yield mature proteins. Two signal peptidase-mediated cleavages within the polyprotein produce the structural proteins capsid, E2, and E1. The E2 signal peptide remains attached to the C-terminus of the capsid protein after cleavage by the signal peptidase. Another signal peptide at E2 C-terminus directs E1 to the ER, with a similar mechanism. Contains three N-linked oligosaccharides. In terms of processing, capsid is phosphorylated on Ser-46 by host. This phosphorylation negatively regulates capsid protein RNA-binding activity. Dephosphorylated by human PP1A.

The protein localises to the virion. It is found in the host cytoplasm. Its subcellular location is the host mitochondrion. It localises to the virion membrane. The protein resides in the host Golgi apparatus membrane. Its function is as follows. Capsid protein interacts with genomic RNA and assembles into icosahedric core particles 65-70 nm in diameter. The resulting nucleocapsid eventually associates with the cytoplasmic domain of E2 at the cell membrane, leading to budding and formation of mature virions from host Golgi membranes. Phosphorylation negatively regulates RNA-binding activity, possibly delaying virion assembly during the viral replication phase. Capsid protein dimerizes and becomes disulfide-linked in the virion. Modulates genomic RNA replication. Modulates subgenomic RNA synthesis by interacting with human C1QBP/SF2P32. Induces both perinuclear clustering of mitochondria and the formation of electron-dense intermitochondrial plaques, both hallmarks of rubella virus infected cells. Induces apoptosis when expressed in transfected cells. Functionally, responsible for viral attachment to target host cell, by binding to the cell receptor. Its transport to the plasma membrane depends on interaction with E1 protein. The surface glycoproteins display an irregular helical organization and a pseudo-tetrameric inner nucleocapsid arrangement. Class II viral fusion protein. Fusion activity is inactive as long as E1 is bound to E2 in mature virion. After virus attachment to target cell and clathrin-mediated endocytosis, acidification of the endosome would induce dissociation of E1/E2 heterodimer and concomitant trimerization of the E1 subunits. This E1 homotrimer is fusion active, and promotes release of viral nucleocapsid in cytoplasm after endosome and viral membrane fusion. The cytoplasmic tail of spike glycoprotein E1 modulates virus release. The surface glycoproteins display an irregular helical organization and a pseudo-tetrameric inner nucleocapsid arrangement. This Homo sapiens (Human) protein is Structural polyprotein.